A 258-amino-acid polypeptide reads, in one-letter code: Ubiquinone/menaquinone biosynthesis C-methyltransferase UbiE (258 aa).

Residues Thr81, Asp102, and 130–131 (NA) each bind S-adenosyl-L-methionine.

Belongs to the class I-like SAM-binding methyltransferase superfamily. MenG/UbiE family.

The enzyme catalyses a 2-demethylmenaquinol + S-adenosyl-L-methionine = a menaquinol + S-adenosyl-L-homocysteine + H(+). It carries out the reaction a 2-methoxy-6-(all-trans-polyprenyl)benzene-1,4-diol + S-adenosyl-L-methionine = a 5-methoxy-2-methyl-3-(all-trans-polyprenyl)benzene-1,4-diol + S-adenosyl-L-homocysteine + H(+). It functions in the pathway quinol/quinone metabolism; menaquinone biosynthesis; menaquinol from 1,4-dihydroxy-2-naphthoate: step 2/2. Its pathway is cofactor biosynthesis; ubiquinone biosynthesis. Its function is as follows. Methyltransferase required for the conversion of demethylmenaquinol (DMKH2) to menaquinol (MKH2) and the conversion of 2-polyprenyl-6-methoxy-1,4-benzoquinol (DDMQH2) to 2-polyprenyl-3-methyl-6-methoxy-1,4-benzoquinol (DMQH2). The protein is Ubiquinone/menaquinone biosynthesis C-methyltransferase UbiE of Allorhizobium ampelinum (strain ATCC BAA-846 / DSM 112012 / S4) (Agrobacterium vitis (strain S4)).